The chain runs to 470 residues: Argininosuccinate lyase (470 aa).

Belongs to the lyase 1 family. Argininosuccinate lyase subfamily.

The protein resides in the cytoplasm. It catalyses the reaction 2-(N(omega)-L-arginino)succinate = fumarate + L-arginine. It participates in amino-acid biosynthesis; L-arginine biosynthesis; L-arginine from L-ornithine and carbamoyl phosphate: step 3/3. The protein is Argininosuccinate lyase of Mycobacterium sp. (strain MCS).